The primary structure comprises 375 residues: MATRDYYEVLEISRTADDGEIKKSYRRLAMRYHPDRNPDDASAEERFKEISAAYEVLSDPQKRQAYDRFGHAGVNGGGGGPGAGFGGGGGGFGDVFSDLFEQAFGGGFRGQDSGRGADLRYELELTLEEAALGKEVTIQIPSSATCEVCRGSGAKPGSAVEDCATCGGRGQVRMVQGFFSVTRPCPQCNGSGKVIKEPCTNCHGHGRVRRNRDLQVKVPAGVDTGDRIRLNGEGEAGERGGPAGDLYIQVRVLPHALFERDGDDLHCAVPVQFTTMAMGGELEVPTLTGRAKVQIAPGTQSGAVFRLRGKGIKGVRSKLNGDLHCQLQVEVPVHLSARQKELLEEFAREGGDNIQHPQQESWWNKAKDFFDRMGL.

A J domain is found at 5-70; it reads DYYEVLEISR…QKRQAYDRFG (66 aa). Residues 133–211 form a CR-type zinc finger; the sequence is GKEVTIQIPS…CHGHGRVRRN (79 aa). Zn(2+) contacts are provided by Cys146, Cys149, Cys163, Cys166, Cys185, Cys188, Cys199, and Cys202. CXXCXGXG motif repeat units follow at residues 146–153, 163–170, 185–192, and 199–206; these read CEVCRGSG, CATCGGRG, CPQCNGSG, and CTNCHGHG.

Belongs to the DnaJ family. Homodimer. Requires Zn(2+) as cofactor.

The protein resides in the cytoplasm. Functionally, participates actively in the response to hyperosmotic and heat shock by preventing the aggregation of stress-denatured proteins and by disaggregating proteins, also in an autonomous, DnaK-independent fashion. Unfolded proteins bind initially to DnaJ; upon interaction with the DnaJ-bound protein, DnaK hydrolyzes its bound ATP, resulting in the formation of a stable complex. GrpE releases ADP from DnaK; ATP binding to DnaK triggers the release of the substrate protein, thus completing the reaction cycle. Several rounds of ATP-dependent interactions between DnaJ, DnaK and GrpE are required for fully efficient folding. Also involved, together with DnaK and GrpE, in the DNA replication of plasmids through activation of initiation proteins. This chain is Chaperone protein DnaJ, found in Acidithiobacillus ferrooxidans (strain ATCC 23270 / DSM 14882 / CIP 104768 / NCIMB 8455) (Ferrobacillus ferrooxidans (strain ATCC 23270)).